Consider the following 373-residue polypeptide: Glutamate 5-kinase (373 aa).

Lys12 contributes to the ATP binding site. Substrate-binding residues include Ser52, Asp139, and Asn154. 216–222 (TGGMVTK) provides a ligand contact to ATP. Positions 281–359 (RGNICIDDGA…DEINTVLAGN (79 aa)) constitute a PUA domain.

This sequence belongs to the glutamate 5-kinase family.

It localises to the cytoplasm. It carries out the reaction L-glutamate + ATP = L-glutamyl 5-phosphate + ADP. It functions in the pathway amino-acid biosynthesis; L-proline biosynthesis; L-glutamate 5-semialdehyde from L-glutamate: step 1/2. In terms of biological role, catalyzes the transfer of a phosphate group to glutamate to form L-glutamate 5-phosphate. This is Glutamate 5-kinase from Dehalococcoides mccartyi (strain ATCC BAA-2266 / KCTC 15142 / 195) (Dehalococcoides ethenogenes (strain 195)).